The chain runs to 122 residues: Basic phospholipase A2 PLA-B (122 aa).

Intrachain disulfides connect cysteine 26-cysteine 115, cysteine 28-cysteine 44, cysteine 43-cysteine 95, cysteine 49-cysteine 122, cysteine 50-cysteine 88, cysteine 57-cysteine 81, and cysteine 75-cysteine 86. Ca(2+) contacts are provided by tyrosine 27, glycine 29, and glycine 31. Residue histidine 47 is part of the active site. Aspartate 48 provides a ligand contact to Ca(2+). Aspartate 89 is an active-site residue.

It belongs to the phospholipase A2 family. Group II subfamily. D49 sub-subfamily. Ca(2+) is required as a cofactor. Expressed by the venom gland.

Its subcellular location is the secreted. The catalysed reaction is a 1,2-diacyl-sn-glycero-3-phosphocholine + H2O = a 1-acyl-sn-glycero-3-phosphocholine + a fatty acid + H(+). In terms of biological role, snake venom phospholipase A2 (PLA2) that displays edema-inducing activities. PLA-B is three times more active than PLA-A in edema-inducing activities. PLA2 catalyzes the calcium-dependent hydrolysis of the 2-acyl groups in 3-sn-phosphoglycerides. The polypeptide is Basic phospholipase A2 PLA-B (Protobothrops flavoviridis (Habu)).